Consider the following 502-residue polypeptide: Lysine--tRNA ligase (502 aa).

Mg(2+)-binding residues include Glu411 and Glu418.

The protein belongs to the class-II aminoacyl-tRNA synthetase family. Homodimer. Mg(2+) serves as cofactor.

The protein resides in the cytoplasm. It carries out the reaction tRNA(Lys) + L-lysine + ATP = L-lysyl-tRNA(Lys) + AMP + diphosphate. This is Lysine--tRNA ligase from Chromohalobacter salexigens (strain ATCC BAA-138 / DSM 3043 / CIP 106854 / NCIMB 13768 / 1H11).